A 983-amino-acid chain; its full sequence is Eukaryotic translation initiation factor 4E transporter (983 aa).

Residues 1–22 (MEKSVAETENGDAFLELKKLPT) form a disordered region. At S4 the chain carries Phosphoserine. A YXXXXLphi motif motif is present at residues 29-35 (YTKEELL). Residues 40-99 (RPYSKQRPSCLSEKYDSDGVWDPEKWHASLYPASGRSSPVESLKKESESDRPSLVRRIAD) form a disordered region. The span at 52–66 (EKYDSDGVWDPEKWH) shows a compositional bias: basic and acidic residues. S73 and S77 each carry phosphoserine. Over residues 81–99 (SLKKESESDRPSLVRRIAD) the composition is skewed to basic and acidic residues. Phosphoserine occurs at positions 114, 119, 135, and 137. The interval 130–160 (VSSRRSGSPLEKDSDGLRLLGGRRIGSGRII) is interaction with CSDE1. A Nuclear localization signal motif is present at residues 194–210 (RREFGDSKRVFGERRRN). Residues 206–229 (ERRRNDSYTEEEPEWFSAGPTSQS) form a disordered region. The tract at residues 218–239 (PEWFSAGPTSQSETIELTGFDD) is interaction with DDX6. Phosphoserine occurs at positions 300, 344, 352, and 373. Positions 341 to 360 (SNPSRSGSRSSSLGSTPHEE) are disordered. The segment covering 344-355 (SRSGSRSSSLGS) has biased composition (low complexity). K409 participates in a covalent cross-link: Glycyl lysine isopeptide (Lys-Gly) (interchain with G-Cter in SUMO2). At S416 the chain carries Phosphoserine. A Nuclear export signal motif is present at residues 437–446 (VEAGLKGLKV). Residues 447 to 489 (DQQMKNSTPFMAEHLEETLSAASSNRQLKKDGDMTAFNKLVNT) are interaction with LSM14A. K485 is modified (N6-acetyllysine). 2 positions are modified to phosphoserine: S563 and S586. Disordered stretches follow at residues 585 to 616 (PSPI…SAQM), 642 to 693 (FYQP…MLSP), 708 to 800 (REKT…VPGT), and 906 to 951 (LHPP…SSPV). Positions 612–637 (VSAQMSQLELQQAALEGLALPHDLAV) match the Nuclear export signal motif. The segment covering 651-660 (QVDRTRDGLR) has biased composition (basic and acidic residues). At S692 the chain carries Phosphoserine. Residues 694-712 (SFTPTSVIRKMYESREKTK) form an interaction with PATL1 region. A compositionally biased stretch (basic and acidic residues) spans 724–734 (DGKEDTQKTSE). Composition is skewed to polar residues over residues 735–774 (ENLL…QTSR) and 910–928 (GSSS…NVPS). Phosphoserine occurs at positions 751, 919, and 949. Residues 938–983 (QLEHRTSQRSSSPVGLAKWFGSDVLQQPLPSMPTKVISVDELEYRQ) form an interaction with LSM14A region.

The protein belongs to the 4E-T/EIF4E-T family. In terms of assembly, interacts (via YXXXXLphi motif) with EIF4E. Interacts (via YXXXXLphi motif) with EIF4E2. Interacts with DDX6. Interacts with CSDE1/UNR. Interacts with CNOT1; promoting association with the CCR4-NOT complex. Interacts with LSM14A; promoting EIF4ENIF1 localization to P-bodies. Interacts with PATL1. Interacts with importin beta only in the presence of importin alpha, suggesting a direct interaction with importin alpha. Interacts with APOBEC3G in an RNA-dependent manner. In terms of processing, phosphorylation by MAPK8/JNK1 and or MAPK9/JNK2 in response to oxidative stress promotes P-body assembly. Phosphorylated during meiotic maturation. As to expression, highly expressed in developing oocytes.

The protein localises to the cytoplasm. It is found in the nucleus. Its subcellular location is the PML body. The protein resides in the nucleus speckle. EIF4E-binding protein that regulates translation and stability of mRNAs in processing bodies (P-bodies). Plays a key role in P-bodies to coordinate the storage of translationally inactive mRNAs in the cytoplasm and prevent their degradation. Acts as a binding platform for multiple RNA-binding proteins: promotes deadenylation of mRNAs via its interaction with the CCR4-NOT complex, and blocks decapping via interaction with eIF4E (EIF4E and EIF4E2), thereby protecting deadenylated and repressed mRNAs from degradation. Component of a multiprotein complex that sequesters and represses translation of proneurogenic factors during neurogenesis. Promotes miRNA-mediated translational repression. Involved in mRNA translational repression mediated by the miRNA effector TNRC6B by protecting TNRC6B-targeted mRNAs from decapping and subsequent decay. Required for the formation of P-bodies. Also acts as a nucleoplasmic shuttling protein, which mediates the nuclear import of EIF4E and DDX6 by a piggy-back mechanism. The protein is Eukaryotic translation initiation factor 4E transporter of Mus musculus (Mouse).